The following is a 581-amino-acid chain: La-related protein 7 (581 aa).

Residue Met1 is modified to N-acetylmethionine. Residues 1-10 are compositionally biased toward polar residues; the sequence is METESGNQKN. Disordered stretches follow at residues 1-28, 188-368, and 410-440; these read METE…KKKR, NPPE…ERHK, and KSES…CPTQ. The HTH La-type RNA-binding domain maps to 28–122; sequence RSRVKQVLAD…KPLGERPKDE (95 aa). Residues 125–203 form the RRM domain; it reads RTVYVELLPK…PRKPGIFPKT (79 aa). A compositionally biased stretch (basic residues) spans 219–228; the sequence is KKKKKKKGRM. Over residues 229 to 240 the composition is skewed to basic and acidic residues; the sequence is KKEDNVQAKEEN. Lys237 participates in a covalent cross-link: Glycyl lysine isopeptide (Lys-Gly) (interchain with G-Cter in SUMO2). Residue Thr257 is modified to Phosphothreonine. 6 positions are modified to phosphoserine: Ser258, Ser261, Ser273, Ser298, Ser299, and Ser300. The span at 316–335 shows a compositional bias: basic and acidic residues; it reads IQKDIIKEPSEASKENRDIE. A Phosphoserine modification is found at Ser337. A Phosphothreonine modification is found at Thr338. The residue at position 351 (Ser351) is a Phosphoserine. Over residues 354 to 367 the composition is skewed to basic residues; the sequence is KTKRKHKKKHKERH. Lys410 participates in a covalent cross-link: Glycyl lysine isopeptide (Lys-Gly) (interchain with G-Cter in SUMO2). A xRRM domain is found at 449 to 562; the sequence is QFVSGVIVKI…TEKLITKAEK (114 aa).

The protein belongs to the LARP7 family. Core component of the 7SK RNP complex, at least composed of 7SK RNA, LARP7, MEPCE, HEXIM1 (or HEXIM2) and P-TEFb (composed of CDK9 and CCNT1/cyclin-T1). Interacts with METTL16. Interacts with RBM7; upon genotoxic stress this interaction is enhanced, triggering the release of inactive P-TEFb complex from the core, yielding to P-TEFb complex activation. Associates with box C/D small nucleolar ribonucleoprotein (snoRNP) complexes.

It is found in the nucleus. It localises to the nucleoplasm. Its function is as follows. RNA-binding protein that specifically binds distinct small nuclear RNA (snRNAs) and regulates their processing and function. Specifically binds the 7SK snRNA (7SK RNA) and acts as a core component of the 7SK ribonucleoprotein (RNP) complex, thereby acting as a negative regulator of transcription elongation by RNA polymerase II. The 7SK RNP complex sequesters the positive transcription elongation factor b (P-TEFb) in a large inactive 7SK RNP complex preventing RNA polymerase II phosphorylation and subsequent transcriptional elongation. The 7SK RNP complex also promotes snRNA gene transcription by RNA polymerase II via interaction with the little elongation complex (LEC). LARP7 specifically binds to the highly conserved 3'-terminal U-rich stretch of 7SK RNA; on stimulation, remains associated with 7SK RNA, whereas P-TEFb is released from the complex. LARP7 also acts as a regulator of mRNA splicing fidelity by promoting U6 snRNA processing. Specifically binds U6 snRNAs and associates with a subset of box C/D RNP complexes: promotes U6 snRNA 2'-O-methylation by facilitating U6 snRNA loading into box C/D RNP complexes. U6 snRNA 2'-O-methylation is required for mRNA splicing fidelity. Binds U6 snRNAs with a 5'-CAGGG-3' sequence motif. U6 snRNA processing is required for spermatogenesis. The polypeptide is La-related protein 7 (Macaca fascicularis (Crab-eating macaque)).